A 333-amino-acid chain; its full sequence is tRNA-dihydrouridine(16) synthase (333 aa).

FMN-binding positions include 19–21 (PMQ) and glutamine 80. The active-site Proton donor is cysteine 110. FMN contacts are provided by residues lysine 151, 211 to 213 (NGD), and 235 to 236 (GR).

This sequence belongs to the Dus family. DusC subfamily. Requires FMN as cofactor.

It carries out the reaction 5,6-dihydrouridine(16) in tRNA + NADP(+) = uridine(16) in tRNA + NADPH + H(+). The enzyme catalyses 5,6-dihydrouridine(16) in tRNA + NAD(+) = uridine(16) in tRNA + NADH + H(+). Functionally, catalyzes the synthesis of 5,6-dihydrouridine (D), a modified base found in the D-loop of most tRNAs, via the reduction of the C5-C6 double bond in target uridines. Specifically modifies U16 in tRNAs. The protein is tRNA-dihydrouridine(16) synthase of Neisseria meningitidis serogroup A / serotype 4A (strain DSM 15465 / Z2491).